The sequence spans 545 residues: Chaperonin GroEL (545 aa).

Residues 30 to 33, Lys51, 87 to 91, Gly415, and Asp495 contribute to the ATP site; these read TLGP and DGTTT.

Belongs to the chaperonin (HSP60) family. In terms of assembly, forms a cylinder of 14 subunits composed of two heptameric rings stacked back-to-back. Interacts with the co-chaperonin GroES.

Its subcellular location is the cytoplasm. The enzyme catalyses ATP + H2O + a folded polypeptide = ADP + phosphate + an unfolded polypeptide.. Its function is as follows. Together with its co-chaperonin GroES, plays an essential role in assisting protein folding. The GroEL-GroES system forms a nano-cage that allows encapsulation of the non-native substrate proteins and provides a physical environment optimized to promote and accelerate protein folding. This chain is Chaperonin GroEL, found in Shewanella sp. (strain MR-7).